A 388-amino-acid chain; its full sequence is Xylose isomerase (388 aa).

Residues His-54 and Asp-57 contribute to the active site. Residues Glu-181, Glu-217, His-220, Asp-245, Asp-255, Asp-257, and Asp-287 each contribute to the Mg(2+) site.

Belongs to the xylose isomerase family. As to quaternary structure, homotetramer. Mg(2+) is required as a cofactor.

The protein resides in the cytoplasm. It carries out the reaction alpha-D-xylose = alpha-D-xylulofuranose. The chain is Xylose isomerase from Streptomyces thermocyaneoviolaceus.